Consider the following 184-residue polypeptide: Shikimate kinase (184 aa).

17-22 (GAGKTT) contacts ATP. Position 21 (T21) interacts with Mg(2+). Positions 39, 63, and 85 each coordinate substrate. Residue R123 participates in ATP binding. R142 provides a ligand contact to substrate.

It belongs to the shikimate kinase family. In terms of assembly, monomer. Mg(2+) serves as cofactor.

It is found in the cytoplasm. The catalysed reaction is shikimate + ATP = 3-phosphoshikimate + ADP + H(+). Its pathway is metabolic intermediate biosynthesis; chorismate biosynthesis; chorismate from D-erythrose 4-phosphate and phosphoenolpyruvate: step 5/7. Functionally, catalyzes the specific phosphorylation of the 3-hydroxyl group of shikimic acid using ATP as a cosubstrate. The polypeptide is Shikimate kinase (Burkholderia thailandensis (strain ATCC 700388 / DSM 13276 / CCUG 48851 / CIP 106301 / E264)).